Consider the following 263-residue polypeptide: Formamidopyrimidine-DNA glycosylase (263 aa).

P2 acts as the Schiff-base intermediate with DNA in catalysis. The active-site Proton donor is the E3. K59 acts as the Proton donor; for beta-elimination activity in catalysis. Residues H93 and R111 each contribute to the DNA site. The FPG-type zinc finger occupies 229–263 (KVYGKNGSLCVRCNNVLIRERHAGRSTHYCPHCQK). The active-site Proton donor; for delta-elimination activity is the R253.

Belongs to the FPG family. In terms of assembly, monomer. The cofactor is Zn(2+).

The catalysed reaction is Hydrolysis of DNA containing ring-opened 7-methylguanine residues, releasing 2,6-diamino-4-hydroxy-5-(N-methyl)formamidopyrimidine.. The enzyme catalyses 2'-deoxyribonucleotide-(2'-deoxyribose 5'-phosphate)-2'-deoxyribonucleotide-DNA = a 3'-end 2'-deoxyribonucleotide-(2,3-dehydro-2,3-deoxyribose 5'-phosphate)-DNA + a 5'-end 5'-phospho-2'-deoxyribonucleoside-DNA + H(+). Involved in base excision repair of DNA damaged by oxidation or by mutagenic agents. Acts as a DNA glycosylase that recognizes and removes damaged bases. Has a preference for oxidized purines, such as 7,8-dihydro-8-oxoguanine (8-oxoG). Has AP (apurinic/apyrimidinic) lyase activity and introduces nicks in the DNA strand. Cleaves the DNA backbone by beta-delta elimination to generate a single-strand break at the site of the removed base with both 3'- and 5'-phosphates. This chain is Formamidopyrimidine-DNA glycosylase, found in Carboxydothermus hydrogenoformans (strain ATCC BAA-161 / DSM 6008 / Z-2901).